Reading from the N-terminus, the 202-residue chain is 3-isopropylmalate dehydratase small subunit 1 (202 aa).

Belongs to the LeuD family. LeuD type 1 subfamily. In terms of assembly, heterodimer of LeuC and LeuD.

The enzyme catalyses (2R,3S)-3-isopropylmalate = (2S)-2-isopropylmalate. The protein operates within amino-acid biosynthesis; L-leucine biosynthesis; L-leucine from 3-methyl-2-oxobutanoate: step 2/4. In terms of biological role, catalyzes the isomerization between 2-isopropylmalate and 3-isopropylmalate, via the formation of 2-isopropylmaleate. The sequence is that of 3-isopropylmalate dehydratase small subunit 1 from Mannheimia succiniciproducens (strain KCTC 0769BP / MBEL55E).